A 332-amino-acid chain; its full sequence is Ketol-acid reductoisomerase (NADP(+)) (332 aa).

The 181-residue stretch at 2–182 folds into the KARI N-terminal Rossmann domain; that stretch reads AKVYIDKDAS…GATRAGVIET (181 aa). Residues 25 to 28, serine 53, and 83 to 86 contribute to the NADP(+) site; these read YGSQ and DMVQ. Residue histidine 108 is part of the active site. Glycine 134 contacts NADP(+). In terms of domain architecture, KARI C-terminal knotted spans 183–328; the sequence is TFKEETETDL…RQIREISLRG (146 aa). Mg(2+) is bound by residues aspartate 191, glutamate 195, glutamate 227, and glutamate 231. Residue serine 252 coordinates substrate.

This sequence belongs to the ketol-acid reductoisomerase family. It depends on Mg(2+) as a cofactor.

It catalyses the reaction (2R)-2,3-dihydroxy-3-methylbutanoate + NADP(+) = (2S)-2-acetolactate + NADPH + H(+). The catalysed reaction is (2R,3R)-2,3-dihydroxy-3-methylpentanoate + NADP(+) = (S)-2-ethyl-2-hydroxy-3-oxobutanoate + NADPH + H(+). Its pathway is amino-acid biosynthesis; L-isoleucine biosynthesis; L-isoleucine from 2-oxobutanoate: step 2/4. It functions in the pathway amino-acid biosynthesis; L-valine biosynthesis; L-valine from pyruvate: step 2/4. Involved in the biosynthesis of branched-chain amino acids (BCAA). Catalyzes an alkyl-migration followed by a ketol-acid reduction of (S)-2-acetolactate (S2AL) to yield (R)-2,3-dihydroxy-isovalerate. In the isomerase reaction, S2AL is rearranged via a Mg-dependent methyl migration to produce 3-hydroxy-3-methyl-2-ketobutyrate (HMKB). In the reductase reaction, this 2-ketoacid undergoes a metal-dependent reduction by NADPH to yield (R)-2,3-dihydroxy-isovalerate. This is Ketol-acid reductoisomerase (NADP(+)) from Sulfurisphaera tokodaii (strain DSM 16993 / JCM 10545 / NBRC 100140 / 7) (Sulfolobus tokodaii).